A 300-amino-acid chain; its full sequence is Tyrosine recombinase XerC (300 aa).

The Core-binding (CB) domain occupies 1–86 (MESVLDAFDQ…AVKTFTAWAV (86 aa)). Residues 107-294 (TLPAVLRQDQ…TVARLRAVHD (188 aa)) enclose the Tyr recombinase domain. Residues Arg-151, Lys-175, His-246, Arg-249, and His-272 contribute to the active site. Tyr-281 serves as the catalytic O-(3'-phospho-DNA)-tyrosine intermediate.

The protein belongs to the 'phage' integrase family. XerC subfamily. In terms of assembly, forms a cyclic heterotetrameric complex composed of two molecules of XerC and two molecules of XerD.

The protein resides in the cytoplasm. Its function is as follows. Site-specific tyrosine recombinase, which acts by catalyzing the cutting and rejoining of the recombining DNA molecules. The XerC-XerD complex is essential to convert dimers of the bacterial chromosome into monomers to permit their segregation at cell division. It also contributes to the segregational stability of plasmids. The chain is Tyrosine recombinase XerC from Mycobacterium sp. (strain KMS).